A 599-amino-acid chain; its full sequence is Dual specificity tyrosine-phosphorylation-regulated kinase 2 (599 aa).

Residues 1–55 form a disordered region; it reads MLTRKPSAAAPAAYPTGRGGDTAVRQLQASPGIGAGAPRSGVGTGPPSPIALPPL. Phosphoserine is present on Ser-30. Position 104 is a phosphothreonine; by ATM (Thr-104). Positions 187 to 189 match the Nuclear localization signal motif; sequence KKR. Residues 220-533 enclose the Protein kinase domain; sequence YEVLKVIGKG…PGQALRHPWL (314 aa). ATP is bound by residues 226–234, Lys-249, and 299–302; these read IGKGSFGQV and FELL. The active-site Proton acceptor is Asp-346. The residue at position 379 (Thr-379) is a Phosphothreonine; by MAP3K10. A Phosphotyrosine; by autocatalysis modification is found at Tyr-380. A Phosphoserine; by ATM modification is found at Ser-440. The residue at position 447 (Ser-447) is a Phosphoserine; by MAP3K10.

It belongs to the protein kinase superfamily. CMGC Ser/Thr protein kinase family. MNB/DYRK subfamily. Component of an E3 ligase complex containing DYRK2, EDD/UBR5, DDB1 and DCAF1 (EDVP complex). Interacts directly with EDD/UBR5, DDB1 and DCAF1. Interacts with SIAH2 and MDM2. Interacts with MAP3K10 and NFATC1. May also interact with CCNL2. Mg(2+) serves as cofactor. Requires Mn(2+) as cofactor. Autophosphorylates cotranslationally on the second tyrosine residue in the Tyr-X-Tyr motif in the activation loop, but once mature, does not have any protein tyrosine kinase activity. Phosphorylated at Thr-104 and Ser-440 by ATM in response to genotoxic stress. Post-translationally, under normal conditions, polyubiquitinated in the nucleus by MDM2, leading to its proteasomal degradation. Phosphorylation on Thr-104 and Ser-440 by ATM in response to genotoxic stress disrupts MDM2 binding and prevents MDM2-mediated ubiquitination and subsequent proteasomal degradation. Polyubiquitinated by SIAH2, leading to its proteasomal degradation. Polyubiquitinated by SIAH2 occurs under normal conditions, and is enhanced in response to hypoxia.

The protein resides in the cytoplasm. Its subcellular location is the nucleus. The catalysed reaction is L-seryl-[protein] + ATP = O-phospho-L-seryl-[protein] + ADP + H(+). The enzyme catalyses L-threonyl-[protein] + ATP = O-phospho-L-threonyl-[protein] + ADP + H(+). It catalyses the reaction L-tyrosyl-[protein] + ATP = O-phospho-L-tyrosyl-[protein] + ADP + H(+). Its activity is regulated as follows. Activated by autophosphorylation on the second tyrosine residue in the Tyr-X-Tyr motif in the activation loop. Serine/threonine-protein kinase involved in the regulation of the mitotic cell cycle, cell proliferation, apoptosis, organization of the cytoskeleton and neurite outgrowth. Functions in part via its role in ubiquitin-dependent proteasomal protein degradation. Functions downstream of ATM and phosphorylates p53/TP53 at 'Ser-46', and thereby contributes to the induction of apoptosis in response to DNA damage. Phosphorylates NFATC1, and thereby inhibits its accumulation in the nucleus and its transcription factor activity. Phosphorylates EIF2B5 at 'Ser-544', enabling its subsequent phosphorylation and inhibition by GSK3B. Likewise, phosphorylation of NFATC1, CRMP2/DPYSL2 and CRMP4/DPYSL3 promotes their subsequent phosphorylation by GSK3B. May play a general role in the priming of GSK3 substrates. Inactivates GYS1 by phosphorylation at 'Ser-641', and potentially also a second phosphorylation site, thus regulating glycogen synthesis. Mediates EDVP E3 ligase complex formation and is required for the phosphorylation and subsequent degradation of KATNA1. Phosphorylates TERT at 'Ser-457', promoting TERT ubiquitination by the EDVP complex. Phosphorylates SIAH2, and thereby increases its ubiquitin ligase activity. Promotes the proteasomal degradation of MYC and JUN, and thereby regulates progress through the mitotic cell cycle and cell proliferation. Promotes proteasomal degradation of GLI2 and GLI3, and thereby plays a role in smoothened and sonic hedgehog signaling. Phosphorylates CRMP2/DPYSL2, CRMP4/DPYSL3, DCX, EIF2B5, EIF4EBP1, GLI2, GLI3, GYS1, JUN, MDM2, MYC, NFATC1, p53/TP53, TAU/MAPT and KATNA1. Can phosphorylate histone H1, histone H3 and histone H2B (in vitro). Can phosphorylate CARHSP1 (in vitro). Plays a role in cytoskeleton organization and neurite outgrowth via its phosphorylation of DCX. This Mus musculus (Mouse) protein is Dual specificity tyrosine-phosphorylation-regulated kinase 2.